Here is a 305-residue protein sequence, read N- to C-terminus: Glycine cleavage system transcriptional activator (305 aa).

The region spanning 6-63 (PPLNALRVFDAAARHLSFTRAAEELFVTQAAVSHQIKSLEDFLGLKLFRRRNRSLLLT) is the HTH lysR-type domain. Residues 23-42 (FTRAAEELFVTQAAVSHQIK) constitute a DNA-binding region (H-T-H motif).

This sequence belongs to the LysR transcriptional regulatory family.

It localises to the cytoplasm. Regulatory protein for the glycine cleavage system operon (gcv). Mediates activation of gcv by glycine and repression by purines. GcvA is negatively autoregulated. Binds to three sites upstream of the gcv promoter. In Escherichia coli O157:H7, this protein is Glycine cleavage system transcriptional activator (gcvA).